A 123-amino-acid chain; its full sequence is Large ribosomal subunit protein uL18 (123 aa).

The protein belongs to the universal ribosomal protein uL18 family. In terms of assembly, part of the 50S ribosomal subunit; part of the 5S rRNA/L5/L18/L25 subcomplex. Contacts the 5S and 23S rRNAs.

Its function is as follows. This is one of the proteins that bind and probably mediate the attachment of the 5S RNA into the large ribosomal subunit, where it forms part of the central protuberance. In Wolbachia pipientis wMel, this protein is Large ribosomal subunit protein uL18.